A 275-amino-acid chain; its full sequence is L-aspartate dehydrogenase (275 aa).

2 residues coordinate NAD(+): Ala-130 and Asn-196. His-226 is a catalytic residue.

Belongs to the L-aspartate dehydrogenase family.

It carries out the reaction L-aspartate + NADP(+) + H2O = oxaloacetate + NH4(+) + NADPH + H(+). It catalyses the reaction L-aspartate + NAD(+) + H2O = oxaloacetate + NH4(+) + NADH + H(+). Its pathway is cofactor biosynthesis; NAD(+) biosynthesis; iminoaspartate from L-aspartate (dehydrogenase route): step 1/1. In terms of biological role, specifically catalyzes the NAD or NADP-dependent dehydrogenation of L-aspartate to iminoaspartate. This is L-aspartate dehydrogenase from Ruegeria pomeroyi (strain ATCC 700808 / DSM 15171 / DSS-3) (Silicibacter pomeroyi).